The following is a 154-amino-acid chain: Protein X (154 aa).

Residues 68–117 (PCALRFTSARSMETTVNAHQVLPKVLHKRTLGLSAMSTTDLEAYFKDCLF) are mitochondrial targeting sequence.

It belongs to the orthohepadnavirus protein X family. In terms of assembly, may form homodimer. May interact with host CEBPA, CFLAR, CREB1, DDB1, E4F1, HBXIP, HSPD1/HSP60, NFKBIA, POLR2E and SMAD4. Interacts with host SMC5-SMC6 complex and induces its degradation. Interacts with host TRPC4AP; leading to prevent ubiquitination of TRPC4AP. Interacts with host PLSCR1; this interaction promotes ubiquitination and degradation of HBx and impairs HBx-mediated cell proliferation. In terms of processing, a fraction may be phosphorylated in insect cells and HepG2 cells, a human hepatoblastoma cell line. Phosphorylated in vitro by host protein kinase C or mitogen-activated protein kinase. N-acetylated in insect cells.

It is found in the host cytoplasm. It localises to the host nucleus. Its subcellular location is the host mitochondrion. Functionally, multifunctional protein that plays a role in silencing host antiviral defenses and promoting viral transcription. Does not seem to be essential for HBV infection. May be directly involved in development of cirrhosis and liver cancer (hepatocellular carcinoma). Most of cytosolic activities involve modulation of cytosolic calcium. The effect on apoptosis is controversial depending on the cell types in which the studies have been conducted. May induce apoptosis by localizing in mitochondria and causing loss of mitochondrial membrane potential. May also modulate apoptosis by binding host CFLAR, a key regulator of the death-inducing signaling complex (DISC). Promotes viral transcription by using the host E3 ubiquitin ligase DDB1 to target the SMC5-SMC6 complex to proteasomal degradation. This host complex would otherwise bind to viral episomal DNA, and prevents its transcription. Moderately stimulates transcription of many different viral and cellular transcription elements. Promoters and enhancers stimulated by HBx contain DNA binding sites for NF-kappa-B, AP-1, AP-2, c-EBP, ATF/CREB, or the calcium-activated factor NF-AT. The polypeptide is Protein X (Homo sapiens (Human)).